Consider the following 350-residue polypeptide: Protein-glutamate methylesterase/protein-glutamine glutaminase 2 (350 aa).

A Response regulatory domain is found at 3–121 (RVLLVDDSPV…DPDYEEAVSE (119 aa)). 4-aspartylphosphate is present on aspartate 54. The 165-residue stretch at 158 to 322 (IHQDIRVIVI…SFVYGMPGAA (165 aa)) folds into the CheB-type methylesterase domain. Active-site residues include serine 170, histidine 197, and aspartate 290.

This sequence belongs to the CheB family. Post-translationally, phosphorylated by CheA. Phosphorylation of the N-terminal regulatory domain activates the methylesterase activity.

It is found in the cytoplasm. The enzyme catalyses [protein]-L-glutamate 5-O-methyl ester + H2O = L-glutamyl-[protein] + methanol + H(+). The catalysed reaction is L-glutaminyl-[protein] + H2O = L-glutamyl-[protein] + NH4(+). Functionally, involved in chemotaxis. Part of a chemotaxis signal transduction system that modulates chemotaxis in response to various stimuli. Catalyzes the demethylation of specific methylglutamate residues introduced into the chemoreceptors (methyl-accepting chemotaxis proteins or MCP) by CheR. Also mediates the irreversible deamidation of specific glutamine residues to glutamic acid. This chain is Protein-glutamate methylesterase/protein-glutamine glutaminase 2, found in Methanospirillum hungatei JF-1 (strain ATCC 27890 / DSM 864 / NBRC 100397 / JF-1).